The primary structure comprises 113 residues: Hydrogenase maturation factor HybF (113 aa).

Ni(2+) contacts are provided by His-2 and Glu-3. Zn(2+) is bound by residues Cys-73, Cys-76, Cys-89, and Cys-92.

Belongs to the HypA/HybF family. HybF subfamily.

Functionally, involved in the maturation of [NiFe] hydrogenases. Required for nickel insertion into the metal center of the hydrogenase. The protein is Hydrogenase maturation factor HybF of Escherichia coli O157:H7.